The sequence spans 607 residues: CRS2-associated factor 2, chloroplastic (607 aa).

Residues M1–A75 are disordered. The N-terminal 79 residues, M1–R79, are a transit peptide targeting the chloroplast. CRM domains follow at residues E228–R324 and E346–P442. The tract at residues K482 to D505 is CRS2 binding. The tract at residues T550 to D576 is disordered.

As to quaternary structure, interacts with CRS2 and RNA. Part of large ribonucleo-protein complexes that include group IIB introns, CRS2 and CAF2.

Its subcellular location is the plastid. It localises to the chloroplast stroma. Functionally, required for the splicing of group IIB introns in chloroplasts. Forms splicing particles with CRS2. Interacts with RNA and confers intron specificity of the splicing particles. This is CRS2-associated factor 2, chloroplastic from Oryza sativa subsp. japonica (Rice).